Here is a 221-residue protein sequence, read N- to C-terminus: Beta-phosphoglucomutase (221 aa).

Asp-8 acts as the Nucleophile in catalysis. Positions 8 and 10 each coordinate Mg(2+). Asp-8 carries the 4-aspartylphosphate modification. Asp-10 functions as the Proton donor/acceptor in the catalytic mechanism. The beta-D-glucose 6-phosphate site is built by Asp-10, Gly-46, Val-47, Arg-49, Ser-116, Lys-117, and Asn-118. Position 170 (Asp-170) interacts with Mg(2+).

It belongs to the HAD-like hydrolase superfamily. CbbY/CbbZ/Gph/YieH family. As to quaternary structure, monomer. Requires Mg(2+) as cofactor. In terms of processing, autophosphorylated.

Its subcellular location is the cytoplasm. It carries out the reaction beta-D-glucose 1-phosphate = beta-D-glucose 6-phosphate. With respect to regulation, activated by phosphorylation. Competitively inhibited by alpha-D-galactose-1-phosphate. Its function is as follows. Catalyzes the interconversion of D-glucose 1-phosphate (G1P) and D-glucose 6-phosphate (G6P), forming beta-D-glucose 1,6-(bis)phosphate (beta-G16P) as an intermediate. The beta-phosphoglucomutase (Beta-PGM) acts on the beta-C(1) anomer of G1P. Glucose or lactose are used in preference to maltose, which is only utilized after glucose or lactose has been exhausted. It plays a key role in the regulation of the flow of carbohydrate intermediates in glycolysis and the formation of the sugar nucleotide UDP-glucose. The protein is Beta-phosphoglucomutase of Lactococcus lactis subsp. lactis (strain IL1403) (Streptococcus lactis).